The chain runs to 335 residues: MDKAERDYWHLRSLEIEEEPRFPPTNVADPLTARNLFQLYVNTFIGANLAESCVFPLDVAKTRMQVDGEQAKKTGKAMPTFRATLTNMIRVEGFKSLYAGFSAMVTRNFIFNSLRVVLYDVFRRPFLYQNERNEEVLKIYMALGCSFTAGCIAQALANPFDIVKVRMQTEGRRRQLGYDVRVNSMVQAFVDIYRRGGLPSMWKGVGPSCMRACLMTTGDVGSYDISKRTFKRLLDLEEGLPLRFVSSMCAGLTASVLSTPADVIKSRMMNQPVDESGKNLYYKNSLDCVRKLVREEGVLTLYKGLMPTWFRLGPFSVLFWLSVEQLRQWEGQSGF.

Solcar repeat units follow at residues 34-125 (RNLF…FRRP), 137-229 (LKIY…SKRT), and 238-329 (EGLP…LRQW). Transmembrane regions (helical) follow at residues 40-57 (YVNT…VFPL), 100-118 (GFSA…RVVL), 138-157 (KIYM…QALA), 204-223 (GVGP…VGSY), 244-264 (FVSS…ADVI), and 304-323 (GLMP…WLSV).

The protein belongs to the mitochondrial carrier (TC 2.A.29) family.

The protein resides in the mitochondrion inner membrane. Functionally, mitochondrial protein that is likely to be responsible for thermogenic respiration. Likely to function in mitochondrial uncoupling i.e. creating mitochondrial proton leaks across the inner mitochondrial membrane and can therefore dissipate the mitochondrial proton gradient and convert the energy of substrate oxidation into heat instead of ATP. Involved in cold tolerance, it is required for development to the adult stage at low temperatures. This chain is Mitochondrial uncoupling protein 4C, found in Drosophila melanogaster (Fruit fly).